We begin with the raw amino-acid sequence, 118 residues long: Large ribosomal subunit protein bL20 (118 aa).

This sequence belongs to the bacterial ribosomal protein bL20 family.

Its function is as follows. Binds directly to 23S ribosomal RNA and is necessary for the in vitro assembly process of the 50S ribosomal subunit. It is not involved in the protein synthesizing functions of that subunit. The protein is Large ribosomal subunit protein bL20 of Psychromonas ingrahamii (strain DSM 17664 / CCUG 51855 / 37).